Here is a 2894-residue protein sequence, read N- to C-terminus: uncharacterized protein (2894 aa).

A helical transmembrane segment spans residues I8–S28. PbH1 repeat units lie at residues E543 to L567, N2085 to N2107, F2135 to K2156, G2158 to N2180, I2201 to N2223, S2224 to E2244, N2245 to N2266, S2267 to N2289, G2290 to G2311, L2341 to S2363, A2367 to G2389, V2390 to G2419, T2422 to G2444, V2455 to G2477, V2479 to E2501, G2512 to A2542, N2550 to G2582, S2589 to A2611, S2612 to N2633, and P2638 to D2660.

It localises to the membrane. This is an uncharacterized protein from Methanocaldococcus jannaschii (strain ATCC 43067 / DSM 2661 / JAL-1 / JCM 10045 / NBRC 100440) (Methanococcus jannaschii).